The following is a 514-amino-acid chain: 2,3-bisphosphoglycerate-independent phosphoglycerate mutase (514 aa).

Positions 14 and 64 each coordinate Mn(2+). The Phosphoserine intermediate role is filled by S64. Substrate is bound by residues H125, 155–156, R187, R193, 263–266, and K337; these read RD and RADR. Mn(2+)-binding residues include D404, H408, D445, H446, and H464.

The protein belongs to the BPG-independent phosphoglycerate mutase family. In terms of assembly, monomer. Mn(2+) serves as cofactor.

The enzyme catalyses (2R)-2-phosphoglycerate = (2R)-3-phosphoglycerate. It functions in the pathway carbohydrate degradation; glycolysis; pyruvate from D-glyceraldehyde 3-phosphate: step 3/5. Its function is as follows. Catalyzes the interconversion of 2-phosphoglycerate and 3-phosphoglycerate. The polypeptide is 2,3-bisphosphoglycerate-independent phosphoglycerate mutase (Serratia proteamaculans (strain 568)).